We begin with the raw amino-acid sequence, 365 residues long: Fructose-1,6-bisphosphate aldolase/phosphatase (365 aa).

Aspartate 11 functions as the Proton acceptor; for FBP phosphatase activity in the catalytic mechanism. Mg(2+) contacts are provided by aspartate 11, histidine 18, aspartate 52, and aspartate 53. Histidine 18 provides a ligand contact to beta-D-fructose 1,6-bisphosphate. Histidine 18 is a dihydroxyacetone phosphate binding site. Position 90 (tyrosine 90) interacts with beta-D-fructose 1,6-bisphosphate. Glutamine 94 is a Mg(2+) binding site. 103 to 104 is a beta-D-fructose 1,6-bisphosphate binding site; that stretch reads GN. Residue aspartate 131 coordinates Mg(2+). Position 132 (lysine 132) interacts with beta-D-fructose 1,6-bisphosphate. Lysine 132 provides a ligand contact to dihydroxyacetone phosphate. The active-site Proton donor/acceptor; for FBP aldolase activity is the tyrosine 228. Mg(2+)-binding residues include lysine 231, aspartate 232, and aspartate 233. Lysine 231 functions as the Schiff-base intermediate with DHAP; for FBP aldolase activity in the catalytic mechanism. Beta-D-fructose 1,6-bisphosphate contacts are provided by residues 241–242, arginine 265, aspartate 286, and tyrosine 347; that span reads QS. 2 residues coordinate dihydroxyacetone phosphate: arginine 265 and aspartate 286.

This sequence belongs to the FBP aldolase/phosphatase family. Homooctamer; dimer of tetramers. Requires Mg(2+) as cofactor.

It catalyses the reaction beta-D-fructose 1,6-bisphosphate + H2O = beta-D-fructose 6-phosphate + phosphate. It carries out the reaction beta-D-fructose 1,6-bisphosphate = D-glyceraldehyde 3-phosphate + dihydroxyacetone phosphate. It participates in carbohydrate biosynthesis; gluconeogenesis. Its function is as follows. Catalyzes two subsequent steps in gluconeogenesis: the aldol condensation of dihydroxyacetone phosphate (DHAP) and glyceraldehyde-3-phosphate (GA3P) to fructose-1,6-bisphosphate (FBP), and the dephosphorylation of FBP to fructose-6-phosphate (F6P). The protein is Fructose-1,6-bisphosphate aldolase/phosphatase of Methanothermobacter marburgensis (strain ATCC BAA-927 / DSM 2133 / JCM 14651 / NBRC 100331 / OCM 82 / Marburg) (Methanobacterium thermoautotrophicum).